Here is a 162-residue protein sequence, read N- to C-terminus: RxLR effector protein PITG_06094 (162 aa).

A signal peptide spans 1 to 20 (MRLSFILAATLTGLLACATA). The RxLR-dEER motif lies at 51 to 91 (RFLRAYNDAEDDSEDPKNVKNTVDAKPADESEDSELSEEER). The segment at 56 to 88 (YNDAEDDSEDPKNVKNTVDAKPADESEDSELSE) is disordered.

The protein belongs to the RxLR effector family.

It localises to the secreted. The protein localises to the host cytoplasm. The protein resides in the host nucleus. Its subcellular location is the host nucleolus. Functionally, effector that enhances P.infestans colonization of Nicotiana benthamiana leaves. The polypeptide is RxLR effector protein PITG_06094 (Phytophthora infestans (strain T30-4) (Potato late blight agent)).